The following is a 195-amino-acid chain: Probable GTP-binding protein EngB (195 aa).

An EngB-type G domain is found at 24-195; sequence DIPEIALAGR…AAWDAILSKI (172 aa). GTP-binding positions include 32-39, 59-63, 77-80, 144-147, and 176-178; these read GRSNVGKS, GKTQL, DVPG, TKAD, and FSS. 2 residues coordinate Mg(2+): Ser39 and Thr61.

It belongs to the TRAFAC class TrmE-Era-EngA-EngB-Septin-like GTPase superfamily. EngB GTPase family. Mg(2+) serves as cofactor.

Its function is as follows. Necessary for normal cell division and for the maintenance of normal septation. The polypeptide is Probable GTP-binding protein EngB (Streptococcus sanguinis (strain SK36)).